The primary structure comprises 411 residues: Serine hydroxymethyltransferase (411 aa).

Residues L117 and 121 to 123 (GHL) each bind (6S)-5,6,7,8-tetrahydrofolate. K226 carries the post-translational modification N6-(pyridoxal phosphate)lysine. (6S)-5,6,7,8-tetrahydrofolate-binding positions include E241 and 349 to 351 (SPF).

Belongs to the SHMT family. Homodimer. Pyridoxal 5'-phosphate is required as a cofactor.

The protein resides in the cytoplasm. It carries out the reaction (6R)-5,10-methylene-5,6,7,8-tetrahydrofolate + glycine + H2O = (6S)-5,6,7,8-tetrahydrofolate + L-serine. It participates in one-carbon metabolism; tetrahydrofolate interconversion. The protein operates within amino-acid biosynthesis; glycine biosynthesis; glycine from L-serine: step 1/1. In terms of biological role, catalyzes the reversible interconversion of serine and glycine with tetrahydrofolate (THF) serving as the one-carbon carrier. This reaction serves as the major source of one-carbon groups required for the biosynthesis of purines, thymidylate, methionine, and other important biomolecules. Also exhibits THF-independent aldolase activity toward beta-hydroxyamino acids, producing glycine and aldehydes, via a retro-aldol mechanism. The polypeptide is Serine hydroxymethyltransferase (Oceanobacillus iheyensis (strain DSM 14371 / CIP 107618 / JCM 11309 / KCTC 3954 / HTE831)).